The primary structure comprises 660 residues: Anoctamin-10 (660 aa).

The Cytoplasmic segment spans residues 1–207; sequence MKVTLSALDT…DSIRGYFGET (207 aa). Residues 208–228 form a helical membrane-spanning segment; it reads IALYFGFLEYFTFALIPMAVI. Topologically, residues 229 to 240 are extracellular; it reads GLPYYLFVWEDY. The helical transmembrane segment at 241–261 threads the bilayer; sequence DKYVIFASFNLIWSTVILELW. Residues 262–316 are Cytoplasmic-facing; sequence KRGCANMTYRWGTLLMKRKFEEPRPGFHGVLGINSITGKEEPLYPSYKRQLRIYL. Residues 317-337 form a helical membrane-spanning segment; the sequence is VSLPFVCLCLYFSLYVMMIYF. The Extracellular portion of the chain corresponds to 338–352; it reads DMEVWALGLHENSGS. The chain crosses the membrane as a helical span at residues 353 to 373; it reads EWTSVLLYVPSIIYAIVIEIM. The Cytoplasmic segment spans residues 374–400; the sequence is NRLYRYAAEFLTSWENHRLESAYQNHL. The helical transmembrane segment at 401-421 threads the bilayer; it reads ILKVLVFNFLNCFASLFYIAF. Over 422–500 the chain is Extracellular; sequence VLKDMKLLRQ…YLGTFDDYLE (79 aa). A helical transmembrane segment spans residues 501 to 521; sequence LFLQFGYVSLFSCVYPLAAAF. The Cytoplasmic portion of the chain corresponds to 522 to 553; the sequence is AVLNNFTEVNSDALKMCRVFKRPFSEPSANIG. The helical transmembrane segment at 554–574 threads the bilayer; it reads VWQLAFETMSVISVVTNCALI. Residues 575–590 lie on the Extracellular side of the membrane; the sequence is GMSPQVNAVFPESKAD. Residues 591-611 form a helical membrane-spanning segment; that stretch reads LILIVVAVEHALLALKFILAF. Residues 612–660 lie on the Cytoplasmic side of the membrane; it reads AIPDKPRHIQMKLARLEFESLEALKQQQMKLVTENLKEEPMESGKEKAT.

It belongs to the anoctamin family. In terms of tissue distribution, highly expressed in the brain. Intermediate levels in the retina and heart and low levels in the placenta, liver, lung, duodenum, kidney, testis and spleen. In brain areas, highest expression in the frontal and occipital cortices and in the cerebellum. Lower expression in the fetal brain than in the adult brain.

Its subcellular location is the cell membrane. Functionally, does not exhibit calcium-activated chloride channel (CaCC) activity. Can inhibit the activity of ANO1. The sequence is that of Anoctamin-10 (ANO10) from Homo sapiens (Human).